The primary structure comprises 142 residues: Large ribosomal subunit protein uL13 (142 aa).

The protein belongs to the universal ribosomal protein uL13 family. As to quaternary structure, part of the 50S ribosomal subunit.

Its function is as follows. This protein is one of the early assembly proteins of the 50S ribosomal subunit, although it is not seen to bind rRNA by itself. It is important during the early stages of 50S assembly. The polypeptide is Large ribosomal subunit protein uL13 (Xanthomonas campestris pv. campestris (strain ATCC 33913 / DSM 3586 / NCPPB 528 / LMG 568 / P 25)).